A 526-amino-acid chain; its full sequence is 3-hydroxy-3-methylglutaryl-coenzyme A reductase 2 (526 aa).

Catalysis depends on charge relay system residues Glu193, Lys325, and Asp401. The active-site Proton donor is the His499. Positions 503 to 526 are disordered; it reads NRKTEAPAPQADTISMTHNLPHSD. Residues 514–526 show a composition bias toward polar residues; that stretch reads DTISMTHNLPHSD.

The protein belongs to the HMG-CoA reductase family.

The enzyme catalyses (R)-mevalonate + 2 NADP(+) + CoA = (3S)-3-hydroxy-3-methylglutaryl-CoA + 2 NADPH + 2 H(+). It participates in metabolic intermediate biosynthesis; (R)-mevalonate biosynthesis; (R)-mevalonate from acetyl-CoA: step 3/3. Functionally, this transmembrane glycoprotein is involved in the control of cholesterol biosynthesis. It is the rate-limiting enzyme of the sterol biosynthesis. The polypeptide is 3-hydroxy-3-methylglutaryl-coenzyme A reductase 2 (hmgB) (Dictyostelium discoideum (Social amoeba)).